Consider the following 313-residue polypeptide: MEGKNLTSISEFFLLGFSEQLEEQKALFGSFLFMYLVTVAGNLLIILVIITDTQLHTPMYFFLANLSLADACFVSTTVPKMLANIQIQSQAISYSGCLLQLYFFMLFVMLEAFLLAVMAYDRYVAICHPLHYILIMSPGLCVFLVSASWIMNALHSLLHTLLMNSLSFCANHEIPHFFCDIDPLLSLSCTDPFTNELVIFITGGLTGLVCVLCLIISYTNIFSTILKIPSAQGKRKAFSTCGSHLSVVSLFFGTSFCVYFIPPSTRSAQKDTVASVMYTVVTPMLNPFIYSLRNQEIKSSLRKLIWVREIHSP.

Residues 1 to 25 (MEGKNLTSISEFFLLGFSEQLEEQK) are Extracellular-facing. The N-linked (GlcNAc...) asparagine glycan is linked to asparagine 5. Residues 26 to 49 (ALFGSFLFMYLVTVAGNLLIILVI) traverse the membrane as a helical segment. At 50–57 (ITDTQLHT) the chain is on the cytoplasmic side. A helical membrane pass occupies residues 58–79 (PMYFFLANLSLADACFVSTTVP). Topologically, residues 80 to 100 (KMLANIQIQSQAISYSGCLLQ) are extracellular. Cysteine 97 and cysteine 189 are joined by a disulfide. Residues 101–120 (LYFFMLFVMLEAFLLAVMAY) traverse the membrane as a helical segment. The Cytoplasmic segment spans residues 121-140 (DRYVAICHPLHYILIMSPGL). Residues 141–158 (CVFLVSASWIMNALHSLL) form a helical membrane-spanning segment. Over 159 to 196 (HTLLMNSLSFCANHEIPHFFCDIDPLLSLSCTDPFTNE) the chain is Extracellular. A helical membrane pass occupies residues 197-219 (LVIFITGGLTGLVCVLCLIISYT). The Cytoplasmic segment spans residues 220 to 236 (NIFSTILKIPSAQGKRK). Residues 237-259 (AFSTCGSHLSVVSLFFGTSFCVY) traverse the membrane as a helical segment. Over 260–272 (FIPPSTRSAQKDT) the chain is Extracellular. A helical membrane pass occupies residues 273 to 292 (VASVMYTVVTPMLNPFIYSL). Topologically, residues 293-313 (RNQEIKSSLRKLIWVREIHSP) are cytoplasmic.

It belongs to the G-protein coupled receptor 1 family.

It localises to the cell membrane. Its function is as follows. Odorant receptor. The sequence is that of Olfactory receptor 1G1 (OR1G1) from Gorilla gorilla gorilla (Western lowland gorilla).